Reading from the N-terminus, the 194-residue chain is Large ribosomal subunit protein bL17 (194 aa).

The disordered stretch occupies residues 126–194; that stretch reads AEPKQTKART…SPEQTNKQEE (69 aa). A compositionally biased stretch (basic residues) spans 131–140; that stretch reads TKARTRRGKG. Composition is skewed to polar residues over residues 144-161 and 181-194; these read ATTT…QDMA and LDTQ…KQEE.

This sequence belongs to the bacterial ribosomal protein bL17 family. As to quaternary structure, part of the 50S ribosomal subunit. Contacts protein L32.

The polypeptide is Large ribosomal subunit protein bL17 (Amoebophilus asiaticus (strain 5a2)).